A 289-amino-acid polypeptide reads, in one-letter code: Phosphatidylserine decarboxylase proenzyme (289 aa).

Catalysis depends on charge relay system; for autoendoproteolytic cleavage activity residues Asp92, His149, and Ser254. Ser254 functions as the Schiff-base intermediate with substrate; via pyruvic acid; for decarboxylase activity in the catalytic mechanism. A Pyruvic acid (Ser); by autocatalysis modification is found at Ser254.

The protein belongs to the phosphatidylserine decarboxylase family. PSD-B subfamily. Prokaryotic type I sub-subfamily. In terms of assembly, heterodimer of a large membrane-associated beta subunit and a small pyruvoyl-containing alpha subunit. It depends on pyruvate as a cofactor. In terms of processing, is synthesized initially as an inactive proenzyme. Formation of the active enzyme involves a self-maturation process in which the active site pyruvoyl group is generated from an internal serine residue via an autocatalytic post-translational modification. Two non-identical subunits are generated from the proenzyme in this reaction, and the pyruvate is formed at the N-terminus of the alpha chain, which is derived from the carboxyl end of the proenzyme. The autoendoproteolytic cleavage occurs by a canonical serine protease mechanism, in which the side chain hydroxyl group of the serine supplies its oxygen atom to form the C-terminus of the beta chain, while the remainder of the serine residue undergoes an oxidative deamination to produce ammonia and the pyruvoyl prosthetic group on the alpha chain. During this reaction, the Ser that is part of the protease active site of the proenzyme becomes the pyruvoyl prosthetic group, which constitutes an essential element of the active site of the mature decarboxylase.

It is found in the cell membrane. The catalysed reaction is a 1,2-diacyl-sn-glycero-3-phospho-L-serine + H(+) = a 1,2-diacyl-sn-glycero-3-phosphoethanolamine + CO2. It functions in the pathway phospholipid metabolism; phosphatidylethanolamine biosynthesis; phosphatidylethanolamine from CDP-diacylglycerol: step 2/2. Its function is as follows. Catalyzes the formation of phosphatidylethanolamine (PtdEtn) from phosphatidylserine (PtdSer). In Pseudomonas aeruginosa (strain UCBPP-PA14), this protein is Phosphatidylserine decarboxylase proenzyme.